A 93-amino-acid polypeptide reads, in one-letter code: Small ribosomal subunit protein uS19 (93 aa).

The interval 74-93 (FSPTRTFRGHVKDDRKSKRR) is disordered. The segment covering 83-93 (HVKDDRKSKRR) has biased composition (basic and acidic residues).

The protein belongs to the universal ribosomal protein uS19 family.

Its function is as follows. Protein S19 forms a complex with S13 that binds strongly to the 16S ribosomal RNA. In Streptomyces griseus subsp. griseus (strain JCM 4626 / CBS 651.72 / NBRC 13350 / KCC S-0626 / ISP 5235), this protein is Small ribosomal subunit protein uS19.